Consider the following 379-residue polypeptide: Dual-specificity RNA methyltransferase RlmN (379 aa).

Glutamate 90 (proton acceptor) is an active-site residue. The 253-residue stretch at 96-348 (EPNRGTLCVS…TTVRKTRGDD (253 aa)) folds into the Radical SAM core domain. A disulfide bridge connects residues cysteine 103 and cysteine 353. Cysteine 110, cysteine 114, and cysteine 117 together coordinate [4Fe-4S] cluster. S-adenosyl-L-methionine is bound by residues 179–180 (GE), serine 211, 233–235 (SLH), and asparagine 310. Cysteine 353 serves as the catalytic S-methylcysteine intermediate.

This sequence belongs to the radical SAM superfamily. RlmN family. [4Fe-4S] cluster is required as a cofactor.

The protein localises to the cytoplasm. The enzyme catalyses adenosine(2503) in 23S rRNA + 2 reduced [2Fe-2S]-[ferredoxin] + 2 S-adenosyl-L-methionine = 2-methyladenosine(2503) in 23S rRNA + 5'-deoxyadenosine + L-methionine + 2 oxidized [2Fe-2S]-[ferredoxin] + S-adenosyl-L-homocysteine. It catalyses the reaction adenosine(37) in tRNA + 2 reduced [2Fe-2S]-[ferredoxin] + 2 S-adenosyl-L-methionine = 2-methyladenosine(37) in tRNA + 5'-deoxyadenosine + L-methionine + 2 oxidized [2Fe-2S]-[ferredoxin] + S-adenosyl-L-homocysteine. In terms of biological role, specifically methylates position 2 of adenine 2503 in 23S rRNA and position 2 of adenine 37 in tRNAs. m2A2503 modification seems to play a crucial role in the proofreading step occurring at the peptidyl transferase center and thus would serve to optimize ribosomal fidelity. This Nitrosomonas eutropha (strain DSM 101675 / C91 / Nm57) protein is Dual-specificity RNA methyltransferase RlmN.